The chain runs to 252 residues: Aspartate/glutamate leucyltransferase (252 aa).

Belongs to the R-transferase family. Bpt subfamily.

It is found in the cytoplasm. The catalysed reaction is N-terminal L-glutamyl-[protein] + L-leucyl-tRNA(Leu) = N-terminal L-leucyl-L-glutamyl-[protein] + tRNA(Leu) + H(+). It catalyses the reaction N-terminal L-aspartyl-[protein] + L-leucyl-tRNA(Leu) = N-terminal L-leucyl-L-aspartyl-[protein] + tRNA(Leu) + H(+). Functions in the N-end rule pathway of protein degradation where it conjugates Leu from its aminoacyl-tRNA to the N-termini of proteins containing an N-terminal aspartate or glutamate. This is Aspartate/glutamate leucyltransferase from Xanthomonas campestris pv. campestris (strain B100).